A 179-amino-acid chain; its full sequence is Large ribosomal subunit protein uL10 (179 aa).

The protein belongs to the universal ribosomal protein uL10 family. In terms of assembly, part of the ribosomal stalk of the 50S ribosomal subunit. The N-terminus interacts with L11 and the large rRNA to form the base of the stalk. The C-terminus forms an elongated spine to which L12 dimers bind in a sequential fashion forming a multimeric L10(L12)X complex.

Its function is as follows. Forms part of the ribosomal stalk, playing a central role in the interaction of the ribosome with GTP-bound translation factors. This is Large ribosomal subunit protein uL10 from Thermotoga petrophila (strain ATCC BAA-488 / DSM 13995 / JCM 10881 / RKU-1).